Here is a 316-residue protein sequence, read N- to C-terminus: tRNA dimethylallyltransferase (316 aa).

27 to 34 serves as a coordination point for ATP; it reads GATATGKT. Residue 29–34 coordinates substrate; it reads TATGKT. The tract at residues 52–55 is interaction with substrate tRNA; that stretch reads DSRQ.

The protein belongs to the IPP transferase family. As to quaternary structure, monomer. Requires Mg(2+) as cofactor.

It catalyses the reaction adenosine(37) in tRNA + dimethylallyl diphosphate = N(6)-dimethylallyladenosine(37) in tRNA + diphosphate. Functionally, catalyzes the transfer of a dimethylallyl group onto the adenine at position 37 in tRNAs that read codons beginning with uridine, leading to the formation of N6-(dimethylallyl)adenosine (i(6)A). The protein is tRNA dimethylallyltransferase of Treponema pallidum (strain Nichols).